The chain runs to 443 residues: MAAAPPPPPPLLLLLLCVCAVFADVPIGTQPEQVHISYPGVQNSMLVTWSSANKTDSVVEYGLWGGKLFSHSATGNSSIFINEGAEYRVMYIHRVLLTDLRPAASYVYHCGSGAGWSELFFFTALNESVFFSPGFALFGDLGNENPQSLSRLQKETQIGTYDVILHIGDFAYDLYEDNGRIGDEFMKQIQSIAAYVPYMTCPGNHEWAFNFSQYRARFSMPGDTEGLWYSWNVGPAHIISFSTEVYFYYLEYGLDLLFRQYEWLRADLQEANRPENRAERPWIITMGHRPMYCSNDDDDDCTHFQSYVRLGRNDTKPPAPGLEELFYQYGVDLELWAHEHTYERLWPVYDYKVFNGSSEEPYVNPKAPVHIITGSAGCREKHDGFIPKPRDWSAFRSTDYGYTRLQLINNTHLYLEQVSDDQYGKVIDQMTLVKEKHGPDAWR.

An N-terminal signal peptide occupies residues 1–23 (MAAAPPPPPPLLLLLLCVCAVFA). N-linked (GlcNAc...) asparagine glycosylation is found at Asn53, Asn76, and Asn126. 3 residues coordinate Fe cation: Asp140, Asp169, and Tyr172. A Zn(2+)-binding site is contributed by Asp169. Zn(2+) is bound at residue Asn204. N-linked (GlcNAc...) asparagine glycosylation occurs at Asn210. Residue His288 coordinates Zn(2+). An N-linked (GlcNAc...) asparagine glycan is attached at Asn313. Zn(2+) is bound at residue His338. Residue His340 participates in Fe cation binding. N-linked (GlcNAc...) asparagine glycosylation is found at Asn355 and Asn409.

The protein belongs to the metallophosphoesterase superfamily. Purple acid phosphatase family. It depends on Fe cation as a cofactor. Requires Zn(2+) as cofactor.

The protein resides in the secreted. It carries out the reaction a phosphate monoester + H2O = an alcohol + phosphate. The chain is Acid phosphatase type 7 from Danio rerio (Zebrafish).